The chain runs to 430 residues: Adenylosuccinate synthetase (430 aa).

GTP is bound by residues 12–18 and 40–42; these read GDEGKGK and GHT. Asp13 (proton acceptor) is an active-site residue. Positions 13 and 40 each coordinate Mg(2+). IMP contacts are provided by residues 13–16, 38–41, Thr128, Arg142, Gln223, Thr238, and Arg302; these read DEGK and NAGH. The Proton donor role is filled by His41. 298 to 304 serves as a coordination point for substrate; the sequence is TTTGRPR. Residues Arg304, 330-332, and 412-414 contribute to the GTP site; these read SID and SVG.

The protein belongs to the adenylosuccinate synthetase family. As to quaternary structure, homodimer. The cofactor is Mg(2+).

The protein resides in the cytoplasm. The enzyme catalyses IMP + L-aspartate + GTP = N(6)-(1,2-dicarboxyethyl)-AMP + GDP + phosphate + 2 H(+). The protein operates within purine metabolism; AMP biosynthesis via de novo pathway; AMP from IMP: step 1/2. Its function is as follows. Plays an important role in the de novo pathway of purine nucleotide biosynthesis. Catalyzes the first committed step in the biosynthesis of AMP from IMP. The sequence is that of Adenylosuccinate synthetase from Streptococcus equi subsp. zooepidemicus (strain H70).